The sequence spans 229 residues: Germin-like protein 3-6 (229 aa).

An N-terminal signal peptide occupies residues 1–31 (MEHSFKTIAAGVVIVVLLLQQAPVLIRATDA). A disulfide bridge links C38 with C53. Residues 67 to 219 (SKIATGGDVN…ALRVDAGVVE (153 aa)) form the Cupin type-1 domain. 2 N-linked (GlcNAc...) asparagine glycosylation sites follow: N80 and N83. Positions 116, 118, 123, and 165 each coordinate Mn(2+).

Belongs to the germin family. Oligomer (believed to be a pentamer but probably hexamer).

It is found in the secreted. The protein resides in the extracellular space. It localises to the apoplast. May play a role in plant defense. Probably has no oxalate oxidase activity even if the active site is conserved. The chain is Germin-like protein 3-6 from Oryza sativa subsp. japonica (Rice).